Reading from the N-terminus, the 522-residue chain is Proactivator polypeptide-like 1 (522 aa).

Residues 1 to 17 form the signal peptide; sequence MLCALILWSGLLGAARA. Positions 18–59 are excised as a propeptide; the sequence is SPISVPRECAKGSEVWCQDLQAAAKCRAVRHCQSAVWNKPTV. Residues 19 to 59 enclose the Saposin A-type 1 domain; sequence PISVPRECAKGSEVWCQDLQAAAKCRAVRHCQSAVWNKPTV. 4 Saposin B-type domains span residues 60 to 144, 183 to 261, 291 to 371, and 393 to 474; these read KSLP…EPLQ, EGAV…ERES, LGLT…GSKR, and QGSF…HGPK. 3 disulfides stabilise this stretch: Cys64-Cys140, Cys67-Cys134, and Cys95-Cys107. Residues 146–183 constitute a propeptide that is removed on maturation; it reads HLAETTSERPLTQEDANEVMAPFLSNGALSFHPSQMPE. 3 disulfide bridges follow: Cys187–Cys257, Cys190–Cys251, and Cys216–Cys227. Residue Asn204 is glycosylated (N-linked (GlcNAc...) asparagine). Residues 261-290 constitute a propeptide that is removed on maturation; sequence SAHWLTRVAAVDGVPSLEMEMPRTNELQMQ. 3 disulfides stabilise this stretch: Cys295–Cys367, Cys298–Cys361, and Cys326–Cys337. An N-linked (GlcNAc...) (high mannose) asparagine glycan is attached at Asn312. The propeptide occupies 371 to 392; the sequence is RRARSISRAVATTPSLPVDEEN. Disulfide bonds link Cys397/Cys470, Cys400/Cys464, and Cys428/Cys439. The propeptide occupies 475–522; it reads TPLLGTDQCVMGPSFWCKSPEAAEMCNALEHCQRLVWKKPVSKINEQP. A Saposin A-type 2 domain is found at 476–516; sequence PLLGTDQCVMGPSFWCKSPEAAEMCNALEHCQRLVWKKPVS.

It localises to the secreted. Its function is as follows. May activate the lysosomal degradation of sphingolipids. This Mus musculus (Mouse) protein is Proactivator polypeptide-like 1 (Psapl1).